The primary structure comprises 53 residues: Reg12l (53 aa).

A propeptide spanning residues 1-34 is cleaved from the precursor; it reads RVLFRSGDQPADQPAERMQDISPEQNPLFHPDKR. 3 disulfide bridges follow: Cys36–Cys50, Cys37–Cys48, and Cys42–Cys51.

Belongs to the conotoxin M superfamily. In terms of tissue distribution, expressed by the venom duct.

The protein localises to the secreted. This Conus regius (Crown cone) protein is Reg12l.